We begin with the raw amino-acid sequence, 198 residues long: Sorcin (198 aa).

4 consecutive EF-hand domains span residues Gly29–Ala64, Phe70–Asn103, Ala100–Arg135, and Phe134–Leu169. Positions 83, 85, 87, 89, 94, 113, 115, 117, 119, and 124 each coordinate Ca(2+).

In terms of assembly, homodimer. Interacts with GCA, RYR2 and ANXA7. As to expression, detected in cardiac myocytes.

The protein resides in the cytoplasm. It is found in the sarcoplasmic reticulum membrane. Calcium-binding protein that modulates excitation-contraction coupling in the heart. Contributes to calcium homeostasis in the heart sarcoplasmic reticulum. Modulates the activity of RYR2 calcium channels. The polypeptide is Sorcin (SRI) (Homo sapiens (Human)).